The following is a 134-amino-acid chain: Small ribosomal subunit protein bS16 (134 aa).

The interval 81 to 134 (LAKRPARSNPKKAEPGKKAQERLAAARQAEEEAKAAAEAAAAAPAEAPAEEAAS) is disordered. The segment covering 91–101 (KKAEPGKKAQE) has biased composition (basic and acidic residues). Over residues 116–134 (AAEAAAAAPAEAPAEEAAS) the composition is skewed to low complexity.

It belongs to the bacterial ribosomal protein bS16 family.

This Chelativorans sp. (strain BNC1) protein is Small ribosomal subunit protein bS16.